The chain runs to 459 residues: Glycosyl hydrolase family 109 protein (459 aa).

The tat-type signal signal peptide spans 1–31; the sequence is MHNIHRRHFLKAAGAVTAGLITANITASTHA. Residues 64–65, aspartate 86, 135–138, 155–156, and asparagine 184 contribute to the NAD(+) site; these read ER, WEWH, and EV. Residues tyrosine 213, arginine 232, 244 to 247, and tyrosine 326 each bind substrate; that span reads YPTH. Tyrosine 244 lines the NAD(+) pocket.

It belongs to the Gfo/Idh/MocA family. Glycosyl hydrolase 109 subfamily. The cofactor is NAD(+). Post-translationally, predicted to be exported by the Tat system. The position of the signal peptide cleavage has not been experimentally proven.

Glycosidase. The polypeptide is Glycosyl hydrolase family 109 protein (Shewanella sp. (strain W3-18-1)).